The primary structure comprises 138 residues: Aspartate 1-decarboxylase (138 aa).

Ser-25 (schiff-base intermediate with substrate; via pyruvic acid) is an active-site residue. Ser-25 is subject to Pyruvic acid (Ser). Substrate is bound at residue Thr-57. Tyr-58 serves as the catalytic Proton donor. A substrate-binding site is contributed by Gly-73 to Ala-75. A disordered region spans residues Val-117–Val-138.

This sequence belongs to the PanD family. In terms of assembly, heterooctamer of four alpha and four beta subunits. Pyruvate is required as a cofactor. In terms of processing, is synthesized initially as an inactive proenzyme, which is activated by self-cleavage at a specific serine bond to produce a beta-subunit with a hydroxyl group at its C-terminus and an alpha-subunit with a pyruvoyl group at its N-terminus.

Its subcellular location is the cytoplasm. It catalyses the reaction L-aspartate + H(+) = beta-alanine + CO2. It functions in the pathway cofactor biosynthesis; (R)-pantothenate biosynthesis; beta-alanine from L-aspartate: step 1/1. Catalyzes the pyruvoyl-dependent decarboxylation of aspartate to produce beta-alanine. The polypeptide is Aspartate 1-decarboxylase (Clavibacter michiganensis subsp. michiganensis (strain NCPPB 382)).